The primary structure comprises 697 residues: Pentatricopeptide repeat-containing protein At5g46460, mitochondrial (697 aa).

A mitochondrion-targeting transit peptide spans 1 to 36 (MWSRAIFQRFRFRAFSISHVIHGKCYRSFSVTVEFQ). PPR repeat units lie at residues 39 to 64 (EVLICNHLLSRRIDEAREVFNQVPSP), 65 to 95 (HVSLYTKMITGYTRSNRLVDALNLFDEMPVR), 96 to 130 (DVVSWNSMISGCVECGDMNTAVKLFDEMPERSVVS), 131 to 157 (WTAMVNGCFRSGKVDQAERLFYQMPVK), 158 to 192 (DTAAWNSMVHGYLQFGKVDDALKLFKQMPGKNVIS), 193 to 223 (WTTMICGLDQNERSGEALDLFKNMLRCCIKS), 224 to 258 (TSRPFTCVITACANAPAFHMGIQVHGLIIKLGFLY), 259 to 289 (EEYVSASLITFYANCKRIGDSRKVFDEKVHE), 290 to 324 (QVAVWTALLSGYSLNKKHEDALSIFSGMLRNSILP), 325 to 359 (NQSTFASGLNSCSALGTLDWGKEMHGVAVKLGLET), 360 to 390 (DAFVGNSLVVMYSDSGNVNDAVSVFIKIFKK), 391 to 425 (SIVSWNSIIVGCAQHGRGKWAFVIFGQMIRLNKEP), 426 to 456 (DEITFTGLLSACSHCGFLEKGRKLFYYMSSG), and 463 to 497 (KIQHYTCMVDILGRCGKLKEAEELIERMVVKPNEM). The segment at 498 to 573 (VWLALLSACR…KPGSSWVVIR (76 aa)) is type E motif. The type E(+) motif stretch occupies residues 574 to 602 (GKKHEFFSGDQPHCSRIYEKLEFLREKLK). The interval 603 to 697 (ELGYAPDYRS…NGTCSCGDYW (95 aa)) is type DYW motif.

The protein belongs to the PPR family. PCMP-H subfamily.

Its subcellular location is the mitochondrion. The polypeptide is Pentatricopeptide repeat-containing protein At5g46460, mitochondrial (PCMP-H49) (Arabidopsis thaliana (Mouse-ear cress)).